A 1172-amino-acid polypeptide reads, in one-letter code: MKEIKRGKRTRYSFERVQTPIPVPNLVEIQTKSYQDFLENGILKVLKKFSPITSSKSDLRKEKGFSLEFVSVRIGEPQNTVQECKERLLTYTVPVYTTVRITDNSTNEMIEEEAFLGYIPYMTPRTTFIINGAERVVVNQLVRSPGIYFVEEAKKTSGTKPIYVAHFLPVRGAWLEILLNLNDEVFYARIDRKRRINLFLLLKALGYSEDLELLSLFPYWIDVEDEYTLQHSEGLIILEDVKTKNGGLIAKRGDVITQGLIEKLENSDIQKIKVAHRYAVNTLEKLNHVYGENIEENRAYIEIFRKLRPGELPRINAAKIFLRNLYFNEERFELSEVGRFKMNNRLEEAYRKYLIEVEGKDPQGVEEVKYDETSNVLTPMDIVLASRNLIEIDKHPGTMDTKDHLGNKRVRTVGELIRIEFERAFSKAVFMIQEKLATYTSLDKISVQSLINVKSIIATINSFFATNPLSQFMDQTNPLAELTHKRRLTAVGPGGLKRERARFEVRDVHHSHYGRMCPIETPEGANIGLITSLSVYSSIDKFGFLITPYVKVVKGKVTNEIVYLTADEEENYKIAPSTIPIDEKGNIIPENVTVRYEEKVLYVNKNNVQFIDVAPNQIVSVSTSLIPFLEHDDANRALMGSNMQRQGVPLIETEAPRVGTGMEWEAAKYSGTLILAKHDGIVKKVDAQKIVIHRIDENGKEMYDSMGNPMLDIYELLKFTRTNQDTCINQRPIVNVGEIVKKDEPIADGPATDMGELALGKNVLVAFVPWEGYNFEDAILISEELLEKETYTSIHIEVYETTARDTRLGPEEITPDIPNVSKEKLRNLDEDGIIRIGAYVQETDILVGKVTPKSESDTTPEEKIIRSVFGEKGKEVKDTSLRVPHGIEGRVIAVHVFDKEKDGDLGPGVNKLIRVYVAIRKPLEVGDKLAGRHGNKGVVSKILPKEDMPFLPDGTPIQVVLSPLGVPSRMNVGQILETSLGWLAMLTNRWFATPVFDGAKEGDILPELYKARKKFGLEMGDFEENPSGKVILRDGRTGKEFDHPILVGYMYVMKLIHIARDKIHARSTGPYSLIHQQPLGGKAQFGGQRFGEMEVWALEAYGAAHTLNEMLTVKSDDIRGRNEVYKAIMKGKNIPEPGLPESFKVLVRELRGIALDVRVYDDEGNEIDIEKL.

It belongs to the RNA polymerase beta chain family. The RNAP catalytic core consists of 2 alpha, 1 beta, 1 beta' and 1 omega subunit. When a sigma factor is associated with the core the holoenzyme is formed, which can initiate transcription.

The enzyme catalyses RNA(n) + a ribonucleoside 5'-triphosphate = RNA(n+1) + diphosphate. DNA-dependent RNA polymerase catalyzes the transcription of DNA into RNA using the four ribonucleoside triphosphates as substrates. In Thermosipho melanesiensis (strain DSM 12029 / CIP 104789 / BI429), this protein is DNA-directed RNA polymerase subunit beta.